The following is a 366-amino-acid chain: DNA-directed RNA polymerase subunit alpha (366 aa).

The tract at residues 1-260 (MAISDNGGGS…DQLQSFIGSE (260 aa)) is alpha N-terminal domain (alpha-NTD). The interval 274 to 366 (EGALPYDHNL…ENLSKQYSED (93 aa)) is alpha C-terminal domain (alpha-CTD).

The protein belongs to the RNA polymerase alpha chain family. As to quaternary structure, homodimer. The RNAP catalytic core consists of 2 alpha, 1 beta, 1 beta' and 1 omega subunit. When a sigma factor is associated with the core the holoenzyme is formed, which can initiate transcription.

It catalyses the reaction RNA(n) + a ribonucleoside 5'-triphosphate = RNA(n+1) + diphosphate. DNA-dependent RNA polymerase catalyzes the transcription of DNA into RNA using the four ribonucleoside triphosphates as substrates. The sequence is that of DNA-directed RNA polymerase subunit alpha from Anaplasma marginale (strain St. Maries).